Reading from the N-terminus, the 210-residue chain is Orotate phosphoribosyltransferase (210 aa).

Residues R94, K98, H100, and 120–128 (EDLISTGGS) each bind 5-phospho-alpha-D-ribose 1-diphosphate. An orotate-binding site is contributed by S124.

It belongs to the purine/pyrimidine phosphoribosyltransferase family. PyrE subfamily. As to quaternary structure, homodimer. Requires Mg(2+) as cofactor.

It catalyses the reaction orotidine 5'-phosphate + diphosphate = orotate + 5-phospho-alpha-D-ribose 1-diphosphate. Its pathway is pyrimidine metabolism; UMP biosynthesis via de novo pathway; UMP from orotate: step 1/2. In terms of biological role, catalyzes the transfer of a ribosyl phosphate group from 5-phosphoribose 1-diphosphate to orotate, leading to the formation of orotidine monophosphate (OMP). This is Orotate phosphoribosyltransferase from Bacillus mycoides (strain KBAB4) (Bacillus weihenstephanensis).